A 142-amino-acid polypeptide reads, in one-letter code: ATP synthase epsilon chain (142 aa).

Belongs to the ATPase epsilon chain family. In terms of assembly, F-type ATPases have 2 components, CF(1) - the catalytic core - and CF(0) - the membrane proton channel. CF(1) has five subunits: alpha(3), beta(3), gamma(1), delta(1), epsilon(1). CF(0) has three main subunits: a, b and c.

The protein localises to the cell membrane. Produces ATP from ADP in the presence of a proton gradient across the membrane. In Lactiplantibacillus plantarum (strain ATCC BAA-793 / NCIMB 8826 / WCFS1) (Lactobacillus plantarum), this protein is ATP synthase epsilon chain.